Reading from the N-terminus, the 388-residue chain is 2-epi-5-epi-valiolone synthase (388 aa).

Residues 92–95, 124–128, 148–149, lysine 161, lysine 170, and 188–191 contribute to the NAD(+) site; these read ERNK, GIVAD, TT, and LLAT. Zn(2+) contacts are provided by glutamate 203, histidine 267, and histidine 283.

It belongs to the sugar phosphate cyclases superfamily. EEVS-like family. NAD(+) serves as cofactor. It depends on Co(2+) as a cofactor. Requires Zn(2+) as cofactor.

The enzyme catalyses D-sedoheptulose 7-phosphate = 2-epi-5-epi-valiolone + phosphate. Catalyzes the cyclization of D-sedoheptulose 7-phosphate to 2-epi-5-epi-valiolone. Probably involved in acarbose biosynthesis. The protein is 2-epi-5-epi-valiolone synthase of Streptomyces glaucescens.